The following is a 132-amino-acid chain: Small ribosomal subunit protein uS8 (132 aa).

This sequence belongs to the universal ribosomal protein uS8 family. As to quaternary structure, part of the 30S ribosomal subunit. Contacts proteins S5 and S12.

In terms of biological role, one of the primary rRNA binding proteins, it binds directly to 16S rRNA central domain where it helps coordinate assembly of the platform of the 30S subunit. The polypeptide is Small ribosomal subunit protein uS8 (Francisella tularensis subsp. holarctica (strain FTNF002-00 / FTA)).